A 379-amino-acid chain; its full sequence is uncharacterized protein (379 aa).

Disordered regions lie at residues 1–25 (MASDWRRQSTSRGIPNEGQNDEKGK), 128–158 (QGKTTSATTSNSTIRGKPSFGRENSAKIERT), and 355–379 (TEKTSILSPRRRQKRMRSLSSQGDI). Positions 128–141 (QGKTTSATTSNSTI) are enriched in polar residues.

This is an uncharacterized protein from Caenorhabditis elegans.